Reading from the N-terminus, the 2748-residue chain is MSRPELIPDILIRHAGESCEKVAFAGPGWTITYGDLEKRTRRLAAHLVHAGIGRGDFVAIVLGRCLQTVESVLAITRAGAVGVPLDSRSPSSELAKVLEHSGARVIITDGRYLTTVRTAAAEGSLIILSTEEIPKMDAIEGKHQIARYQDWIEDAEYSTLDIQIDNLREDEQAFLHYTSGTTSLPKGVLSNQRSWLLNVNSLVSAFELTPEDRFFWPLPLFHCIGHLLCIMGTVVVGASAYLPDADQTLFDSLRDTNAQETTLIVGAPTTFHDLMDAAKRSDPTSPLFLPRLRACMYAGSSASGSLGAQIKEYLGVPLLNNYGCTEGCGSIAVSRTGHTYRHNSSISLLPHWEIKLVDPDGHPVQDGEQGEVCIGGPGLMLEYYRETRTPFTPDGWYPTGDIAIRSSSAAGAELTLVGRRKEIIIRGGENIHPHELEHVLLRHPGVADVVVAGMPHRLLGETPAAFIVKSVANMDFDLSALLAACREVLPDYKIPTAFYEIDTVPRTVIGKPKRLTMTAYTNKPLTARSMLQSRDLIEALVMAETVSACTIDAGPESESNTDWLRRHFDQPFSFLGLSSMAGVVLRDRLAGLTGLDDLPNTLVFDYSTPAAVSTYLHGRLLGPKTAPLPSSTPTTKADSEVEPIAIVSMACRYPGGISSPEDLWQLVSDEIDATTDFPDDRGWDVESLYSTDPDTPNTSTTKRGGFLPDFARFDAGLFGMAPREALATDPQQRLLLETTWELAERGGIAPLSLQGSQTGVFVGTLYEDYEENGFGNDELEAHLGLGSSSSVVSGRVSYCFGLHGPSLVVSTGCSSSLVAIHLAAQSLRNRECSLTIAGGITTMATPRPFTMFSRRRGLSSDGRCRAYSSDASGTGWSEGVGLLLLERLSDAKRNGHQILGLIRGSAVNSDGKSNGLTAPNGPAQQMCIQSALAQAGMSPENVDVLEGHGTATPLGDPIEVQAVISAYGNGDRKNIDSARRSESLLLGSIKSNIGHTQAAAAVAGIIKMVQAMRHGVAPASLHIREPSPQIDWEGSGVELLSKARQWPSVNRPRRAAVSSFGIGGTNSHIILEQPEPVQMQDSTSKRISAAFPWLISGASEVALRAQAHSLLTAWREADSNTFSPLRNQEPADIAFSLATARSALKYRATVTYALGANMHNQIETTLERLAQGEPHPDVMTAHTNTTGNKPRLACLFSGQGSWMPTIDTLEELRATFPVFSAAFQAACDEVDMHLECPLVHAITDGSMLDRTDFAQATLFVFEVAMFRLLESFGIRPDFVAGHSLGEIAAAHAAGALSLRDAATIVTTRAKLMASLPPNGGMVSIAATEAEVAIELSQFDGIASIAAVNSQTSVVVSGTQEAIQAVADRFTSLGRRATVLRNVKHGFHSQLMDHILPGLENALPSSMESENPTTIPLVSTVTGKRAAAAQLRSSNHWIRHVSEPVRFADAVNELRSKEHVSVFVEIGPSAVLSPHVPDAAATHGTVDKLLGMLGQLWARGVPVDWQAVFDGSGARFVDLPVYAFQRQRYWLPYTPLLPVTSMGAVTEQAQERTSGVFGGSRLGHEMIFNATSIPGTGTIICSGYLSTARQLWLRDHIIGGQSLVPASAFTELALRAAQECAERSEISSLILDEMIVIASLDLSSAEDEEQGEPGEVEIQVLIGESQPEDAATQNQRTVDVYSRPRGVATQHEWTQHATGTFQLISQPNPSQESFINGTDPTKAESDVNISEAYAVLSGAGLTYGPSFQGVRAIWRLHDNDLLVQIDPPQDQSQMSTSILHPAVLDAALHASTLASAEKVASGDIRLPFSFRGIQVFEAVGASSPILARIHHIGENSFSMTMTDHSSGVVLAKISEVQLRTWQPTVAGGDLYRLEWIDFASKPTTSTTTDKIVRFESSHDVDATAVSKAVHEGLAEALHAVHEWRADKSPAADEVRLVFVTERATSTGGNSDIDLVAAAVWGFVRSAQAEFGGARVALIDLDGSSESEEALTAALVSREEIVAVHGGKTMIPRLGKQPSVTEPPQAMSLDVSGTVLITGGTGGLGAMLSRDIVHAHGAKSLLLVSRSGIEATGARELYDELRSANAAVRVEACDVSDRAQLAALLDNHNHHQYPPITTVIHCAGVVSDAFLGSQTPERVSSVLRPKVDAAWNLHDLVPDTVRSFVLFSSYVSVLGNEGQAAYSAGNAFLDALARFRVARGLPALSLAWGPWANDAGMAAGSKLDAIPPRIANARPFTDQQGLSLLYRALHMQATNPSEPVLLPLLLRGPFPLVPSAGPAYKTKTNAKRESGSSAVWRRNIAAVPSENRHDTLLGLVRDEIAAVLGYQGQDMLPDQRLDDLGFDSFTSVMLTNRLRVLTGLSYLPVTLALDYDTTTALVEYLLPRIEAEPQPEVDTDSDASTTAGDTSVSRDSGKEDELSPSSSVTTLALEEQDDLNPEIFRGLATIHRRLSQLEQYTAAADLLASAALAMPTFPKTGTVLSSYAAEPQRLATGPSASSNSELPLPLVFIAPFFPRIKIEGVGLSVYSNLASAMNGKRDVFELPHPEAQAVPSDLGTLADLHVHTIRKHFSDRPGIILAGYSAGGTVAYAVASKLANAESEQPRLAGFVLVDTYLTMTGRGDPDWLNALPAEALVSRLQVPPSLGHPKGMGSDSLVGDLDVALAKVGGYFRALRDWDIGLHPLPDALSTLFVRAVDPSDKMPKDTDVWRPRWPRADLTVDVPGSHLALLDKRYAPGAAGEIERWAREDLNA.

An adenylation (A) domain region spans residues 13-511 (RHAGESCEKV…DTVPRTVIGK (499 aa)). A Carrier 1 domain is found at 535–620 (DLIEALVMAE…AVSTYLHGRL (86 aa)). O-(pantetheine 4'-phosphoryl)serine is present on serine 579. The region spanning 641–1073 (VEPIAIVSMA…GTNSHIILEQ (433 aa)) is the Ketosynthase family 3 (KS3) domain. Active-site for beta-ketoacyl synthase activity residues include cysteine 813, histidine 948, and histidine 995. The 294-residue stretch at 1196 to 1489 (FSGQGSWMPT…ATHGTVDKLL (294 aa)) folds into the Malonyl-CoA:ACP transacylase (MAT) domain. Residues 1561–1842 (LGHEMIFNAT…ENSFSMTMTD (282 aa)) form a dehydratase (DH) domain region. The N-terminal hotdog fold stretch occupies residues 1563–1707 (HEMIFNATSI…GTFQLISQPN (145 aa)). Residues 1563 to 1866 (HEMIFNATSI…LRTWQPTVAG (304 aa)) form the PKS/mFAS DH domain. The active-site Proton acceptor; for dehydratase activity is histidine 1595. Positions 1722-1866 (AESDVNISEA…LRTWQPTVAG (145 aa)) are C-terminal hotdog fold. Residue aspartate 1784 is the Proton donor; for dehydratase activity of the active site. The 180-residue stretch at 2031 to 2210 (GTVLITGGTG…ALSLAWGPWA (180 aa)) folds into the Ketoreductase (KR) domain. One can recognise a Carrier 2 domain in the interval 2305–2383 (NRHDTLLGLV…ALVEYLLPRI (79 aa)). Serine 2342 is modified (O-(pantetheine 4'-phosphoryl)serine). The interval 2386–2426 (EPQPEVDTDSDASTTAGDTSVSRDSGKEDELSPSSSVTTLA) is disordered. The segment covering 2396–2407 (DASTTAGDTSVS) has biased composition (low complexity). Positions 2519–2742 (VGLSVYSNLA…GAAGEIERWA (224 aa)) are thioester reductase (TE) domain.

It in the N-terminal section; belongs to the NRP synthetase family. It depends on pantetheine 4'-phosphate as a cofactor.

It functions in the pathway secondary metabolite biosynthesis; flavonoid biosynthesis. Its function is as follows. Hybrid PKS-NRPS synthetase; part of the gene cluster that mediates the biosynthesis of chlorflavonin, a fungal flavonoid with acetolactate synthase inhibitory activity. Within the pathway, the PKS-NRPS cfoA, is responsible for the generation of the key precursor chalcone. The adenylation (A) domain activates benzoic acid or p-hydroxybenzoic acid which are transferred to the thiol group of the pantetheinyl residue of the T domain, and further transferred to the adjacent PKS portion of cfoA. Within the PKS portion of cfoA, benzoic acid or p-hydroxybenzoic acid act as starter units for respectively four malonyl-CoA molecules for elongation by the AT and KS domains. Afterwards, chalcone is cyclized through Claisen condensation and thereby released either spontaneously or catalyzed by the TE domain. Then, a new type of chalcone isomerase, cfoK, catalyzes the conversion of the chalcone into a flavanone by a histidine-mediated oxa-Michael addition mechanism. The desaturation of flavanone to flavone is catalyzed by a new type of flavone synthase, the flavin mononucleotide (FMN)-dependent oxidoreductase cfoJ. Monooxygenases cfoF, cfoG, and P450 cfoH are responsible for the hydroxylation of the flavonoid skeleton at sites C3, C8, and C2', respectively. Like cfoF, the dehydratase cfoI plays also a role in the hydroxylation of position C3. Methyltransferases cfoB, cfoC, and cfoD then catalyze the methylation of C7-OH, C8-OH, and C3-OH, respectively. Finally, the monooxygenase cfoE is responsible for the chlorination of flavonoid at position C3'. This chain is Chalcone synthase cfoA, found in Aspergillus candidus.